The chain runs to 122 residues: Large ribosomal subunit protein uL14 (122 aa).

It belongs to the universal ribosomal protein uL14 family. In terms of assembly, part of the 50S ribosomal subunit. Forms a cluster with proteins L3 and L19. In the 70S ribosome, L14 and L19 interact and together make contacts with the 16S rRNA in bridges B5 and B8.

Functionally, binds to 23S rRNA. Forms part of two intersubunit bridges in the 70S ribosome. The protein is Large ribosomal subunit protein uL14 of Clostridium kluyveri (strain ATCC 8527 / DSM 555 / NBRC 12016 / NCIMB 10680 / K1).